A 331-amino-acid polypeptide reads, in one-letter code: MNNILNRIYNGYNLTEIESYNLFQYIMSGKINNVQLSAILIALKIKGESEQEIMGAMQACLEQAQPFPKQNYMFSDIVGTGGDLSNSINISTASALVGATCGLKIIKHCNSSISGKSGSYDLLKEFDININISQKKSQEMLNKLNVCFLFAPQYHASFKHVSLVRKILKTRTLFNILGPLLNPSNPPLSVIGVYSTKLMIPIAHILKKLNRHRSIIVYSNNIDEVTLHSPTNITELKNSKITSYTLYPESFGVHFHDKNTILGGTPKENYEIVKKVFQGKGPISITETIAANTAILLQLFGNEDLKKNTQYALKIIYSGKVYQKIIELSKF.

5-phospho-alpha-D-ribose 1-diphosphate contacts are provided by residues glycine 79, 82 to 83 (GD), serine 87, 89 to 92 (NIST), 107 to 115 (KHCNSSISG), and serine 119. Residue glycine 79 coordinates anthranilate. Serine 91 contributes to the Mg(2+) binding site. Asparagine 110 is an anthranilate binding site. Residue arginine 165 coordinates anthranilate. 2 residues coordinate Mg(2+): aspartate 223 and glutamate 224.

The protein belongs to the anthranilate phosphoribosyltransferase family. In terms of assembly, homodimer. It depends on Mg(2+) as a cofactor.

The enzyme catalyses N-(5-phospho-beta-D-ribosyl)anthranilate + diphosphate = 5-phospho-alpha-D-ribose 1-diphosphate + anthranilate. The protein operates within amino-acid biosynthesis; L-tryptophan biosynthesis; L-tryptophan from chorismate: step 2/5. Functionally, catalyzes the transfer of the phosphoribosyl group of 5-phosphorylribose-1-pyrophosphate (PRPP) to anthranilate to yield N-(5'-phosphoribosyl)-anthranilate (PRA). The chain is Anthranilate phosphoribosyltransferase from Buchnera aphidicola subsp. Melaphis rhois.